Reading from the N-terminus, the 29-residue chain is MDILSISWAFLMVVFTFSLSLVVWGRSGL.

Residues 3–23 form a helical membrane-spanning segment; it reads ILSISWAFLMVVFTFSLSLVV.

This sequence belongs to the PetN family. In terms of assembly, the 4 large subunits of the cytochrome b6-f complex are cytochrome b6, subunit IV (17 kDa polypeptide, PetD), cytochrome f and the Rieske protein, while the 4 small subunits are PetG, PetL, PetM and PetN. The complex functions as a dimer.

The protein resides in the plastid. Its subcellular location is the chloroplast thylakoid membrane. Functionally, component of the cytochrome b6-f complex, which mediates electron transfer between photosystem II (PSII) and photosystem I (PSI), cyclic electron flow around PSI, and state transitions. This Chara vulgaris (Common stonewort) protein is Cytochrome b6-f complex subunit 8.